The sequence spans 355 residues: Methylthioribose-1-phosphate isomerase (355 aa).

Substrate is bound by residues 47-49 (RGA), Arg91, and Gln199. Asp240 functions as the Proton donor in the catalytic mechanism. Position 250–251 (250–251 (NK)) interacts with substrate.

The protein belongs to the eIF-2B alpha/beta/delta subunits family. MtnA subfamily.

The catalysed reaction is 5-(methylsulfanyl)-alpha-D-ribose 1-phosphate = 5-(methylsulfanyl)-D-ribulose 1-phosphate. It functions in the pathway amino-acid biosynthesis; L-methionine biosynthesis via salvage pathway; L-methionine from S-methyl-5-thio-alpha-D-ribose 1-phosphate: step 1/6. Its function is as follows. Catalyzes the interconversion of methylthioribose-1-phosphate (MTR-1-P) into methylthioribulose-1-phosphate (MTRu-1-P). This Oleidesulfovibrio alaskensis (strain ATCC BAA-1058 / DSM 17464 / G20) (Desulfovibrio alaskensis) protein is Methylthioribose-1-phosphate isomerase.